The primary structure comprises 187 residues: ATP synthase subunit b (187 aa).

A helical transmembrane segment spans residues Pro36 to Trp53.

Belongs to the ATPase B chain family. F-type ATPases have 2 components, F(1) - the catalytic core - and F(0) - the membrane proton channel. F(1) has five subunits: alpha(3), beta(3), gamma(1), delta(1), epsilon(1). F(0) has four main subunits: a(1), b(2) and c(10-14). The alpha and beta chains form an alternating ring which encloses part of the gamma chain. F(1) is attached to F(0) by a central stalk formed by the gamma and epsilon chains, while a peripheral stalk is formed by the delta and b chains.

It is found in the cell inner membrane. F(1)F(0) ATP synthase produces ATP from ADP in the presence of a proton or sodium gradient. F-type ATPases consist of two structural domains, F(1) containing the extramembraneous catalytic core and F(0) containing the membrane proton channel, linked together by a central stalk and a peripheral stalk. During catalysis, ATP synthesis in the catalytic domain of F(1) is coupled via a rotary mechanism of the central stalk subunits to proton translocation. In terms of biological role, component of the F(0) channel, it forms part of the peripheral stalk, linking F(1) to F(0). This Erythrobacter litoralis (strain HTCC2594) protein is ATP synthase subunit b.